The sequence spans 139 residues: uncharacterized protein (139 aa).

A disordered region spans residues Leu-83–Gly-109. A compositionally biased stretch (low complexity) spans Pro-86–Lys-98.

To M.pneumoniae MPN_091 and MPN_463.

This is an uncharacterized protein from Mycoplasma pneumoniae (strain ATCC 29342 / M129 / Subtype 1) (Mycoplasmoides pneumoniae).